The following is a 148-amino-acid chain: Transcription antitermination protein NusB (148 aa).

This sequence belongs to the NusB family.

Involved in transcription antitermination. Required for transcription of ribosomal RNA (rRNA) genes. Binds specifically to the boxA antiterminator sequence of the ribosomal RNA (rrn) operons. In Novosphingobium aromaticivorans (strain ATCC 700278 / DSM 12444 / CCUG 56034 / CIP 105152 / NBRC 16084 / F199), this protein is Transcription antitermination protein NusB.